Reading from the N-terminus, the 163-residue chain is Nucleotide-binding protein BSU11020 (163 aa).

Belongs to the YajQ family.

Functionally, nucleotide-binding protein. This chain is Nucleotide-binding protein BSU11020 (yitK), found in Bacillus subtilis (strain 168).